Consider the following 168-residue polypeptide: Peptidoglycan-associated lipoprotein (168 aa).

The signal sequence occupies residues 1-21 (MEMLKFGKFAALALAMAVAVG). Residue cysteine 22 is the site of N-palmitoyl cysteine attachment. The S-diacylglycerol cysteine moiety is linked to residue cysteine 22. The region spanning 56 to 168 (SDEAALRAIT…AQNRRVELKK (113 aa)) is the OmpA-like domain. Residues 147–168 (RPVATGHDEQSWAQNRRVELKK) are disordered.

The protein belongs to the Pal lipoprotein family. The Tol-Pal system is composed of five core proteins: the inner membrane proteins TolA, TolQ and TolR, the periplasmic protein TolB and the outer membrane protein Pal. They form a network linking the inner and outer membranes and the peptidoglycan layer.

It localises to the cell outer membrane. In terms of biological role, part of the Tol-Pal system, which plays a role in outer membrane invagination during cell division and is important for maintaining outer membrane integrity. The protein is Peptidoglycan-associated lipoprotein of Pseudomonas aeruginosa (strain ATCC 15692 / DSM 22644 / CIP 104116 / JCM 14847 / LMG 12228 / 1C / PRS 101 / PAO1).